Here is a 67-residue protein sequence, read N- to C-terminus: Large ribosomal subunit protein uL29 (67 aa).

It belongs to the universal ribosomal protein uL29 family.

This Sphingopyxis alaskensis (strain DSM 13593 / LMG 18877 / RB2256) (Sphingomonas alaskensis) protein is Large ribosomal subunit protein uL29.